A 527-amino-acid polypeptide reads, in one-letter code: (3S)-3-amino-3-(3-chloro-4-hydroxyphenyl)propanoyl-[peptidyl-carrier protein SgcC2] monooxygenase (527 aa).

Over residues 1 to 10 (MPHGAEREAS) the composition is skewed to basic and acidic residues. The segment at 1 to 22 (MPHGAEREASPAEESAGTRPLT) is disordered. FAD is bound by residues 161 to 163 (HAF), 167 to 170 (PVDR), and Thr-202.

Belongs to the FADH(2)-utilizing monooxygenase family. Homotetramer.

It catalyses the reaction (3S)-3-amino-3-(3-chloro-4-hydroxyphenyl)propanoyl-[SgcC2 peptidyl-carrier protein] + FADH2 + O2 = (3S)-3-amino-3-(3-chloro-4,5-dihydroxyphenyl)propanoyl-[SgcC2 peptidyl-carrier protein] + FAD + H2O + H(+). It participates in antibiotic biosynthesis. The SgcE6-SgcC hydroxylation activity decreases in the presence of excess FAD. Oxygenase component of a two-component system involved in the biosynthesis of the enediyne antitumor antibiotic C-1027. Uses FADH(2) supplied by SgcE6 to catalyze the C-5 hydroxylation of (S)-3-chloro-beta-tyrosyl-S-SgcC2. Can also efficiently catalyze the regioselective hydroxylation of other 3-substituted beta-tyrosyl-S-SgcC2 analogs, including the bromo-, iodo-, fluoro-, and methyl-substituted analogs, but does not accept 3-hydroxy-beta-tyrosyl-S-SgcC2 as a substrate. Is only active with SgcC2 (peptidyl carrier protein)-tethered substrates. The sequence is that of (3S)-3-amino-3-(3-chloro-4-hydroxyphenyl)propanoyl-[peptidyl-carrier protein SgcC2] monooxygenase from Streptomyces globisporus.